A 439-amino-acid polypeptide reads, in one-letter code: Ribosomal protein uS12 methylthiotransferase RimO (439 aa).

Residues 3-113 (HKVGFVSLGC…VVNAVHQHLP (111 aa)) form the MTTase N-terminal domain. Positions 12, 48, 77, 144, 148, and 151 each coordinate [4Fe-4S] cluster. The region spanning 130–367 (LTPRHYAYLK…MQVQAEISRN (238 aa)) is the Radical SAM core domain. In terms of domain architecture, TRAM spans 370–436 (KNKIGSTQTV…DYDLYGDLEY (67 aa)).

Belongs to the methylthiotransferase family. RimO subfamily. It depends on [4Fe-4S] cluster as a cofactor.

It localises to the cytoplasm. It carries out the reaction L-aspartate(89)-[ribosomal protein uS12]-hydrogen + (sulfur carrier)-SH + AH2 + 2 S-adenosyl-L-methionine = 3-methylsulfanyl-L-aspartate(89)-[ribosomal protein uS12]-hydrogen + (sulfur carrier)-H + 5'-deoxyadenosine + L-methionine + A + S-adenosyl-L-homocysteine + 2 H(+). Catalyzes the methylthiolation of an aspartic acid residue of ribosomal protein uS12. The chain is Ribosomal protein uS12 methylthiotransferase RimO from Legionella pneumophila (strain Corby).